The sequence spans 319 residues: Acetyl-coenzyme A carboxylase carboxyl transferase subunit alpha (319 aa).

The CoA carboxyltransferase C-terminal domain maps to 35 to 296 (DLDKEIEQLE…KATLVANLAE (262 aa)).

This sequence belongs to the AccA family. As to quaternary structure, acetyl-CoA carboxylase is a heterohexamer composed of biotin carboxyl carrier protein (AccB), biotin carboxylase (AccC) and two subunits each of ACCase subunit alpha (AccA) and ACCase subunit beta (AccD).

The protein resides in the cytoplasm. It carries out the reaction N(6)-carboxybiotinyl-L-lysyl-[protein] + acetyl-CoA = N(6)-biotinyl-L-lysyl-[protein] + malonyl-CoA. Its pathway is lipid metabolism; malonyl-CoA biosynthesis; malonyl-CoA from acetyl-CoA: step 1/1. In terms of biological role, component of the acetyl coenzyme A carboxylase (ACC) complex. First, biotin carboxylase catalyzes the carboxylation of biotin on its carrier protein (BCCP) and then the CO(2) group is transferred by the carboxyltransferase to acetyl-CoA to form malonyl-CoA. This chain is Acetyl-coenzyme A carboxylase carboxyl transferase subunit alpha, found in Photobacterium profundum (strain SS9).